A 317-amino-acid chain; its full sequence is Putative AP2/ERF and B3 domain-containing protein Os01g0140700 (317 aa).

Residues 1–37 (MEQEAAMVVFSCNSGSGGSSSTTDSKQEEEEEEELAA) are disordered. Positions 27-37 (QEEEEEEELAA) are enriched in acidic residues. Positions 66–121 (RYKGVVPQPNGRWGAQIYERHARVWLGTFPDEEAAARAYDVAALRFRGRDAVTNRA) form a DNA-binding region, AP2/ERF. The TF-B3 DNA-binding region spans 178 to 287 (FEKAVTPSDV…EKHLLIDCKK (110 aa)).

It localises to the nucleus. The sequence is that of Putative AP2/ERF and B3 domain-containing protein Os01g0140700 from Oryza sativa subsp. japonica (Rice).